The chain runs to 495 residues: Histidine--tRNA ligase (495 aa).

Belongs to the class-II aminoacyl-tRNA synthetase family. In terms of assembly, homodimer.

It localises to the cytoplasm. The catalysed reaction is tRNA(His) + L-histidine + ATP = L-histidyl-tRNA(His) + AMP + diphosphate + H(+). This is Histidine--tRNA ligase from Ruegeria pomeroyi (strain ATCC 700808 / DSM 15171 / DSS-3) (Silicibacter pomeroyi).